Here is a 136-residue protein sequence, read N- to C-terminus: MLQPKRTKFRKVHKGRNRGIAVGTEVSFGTFGLKAIGRGRLTARQIEAARRAMTRAVKRQGKIWIRVFPDKPITEKPLEVRMGKGKGNVEYWVALIQPGKVLYEMDGVSEEIARHAFALAAAKLPMKTTFVTKTVM.

The protein belongs to the universal ribosomal protein uL16 family. Part of the 50S ribosomal subunit.

Its function is as follows. Binds 23S rRNA and is also seen to make contacts with the A and possibly P site tRNAs. The polypeptide is Large ribosomal subunit protein uL16 (Haemophilus ducreyi (strain 35000HP / ATCC 700724)).